A 616-amino-acid polypeptide reads, in one-letter code: MITWHDLYTVLTAVVPLYVAMILAYGSVQWWKIFSPDQCSGINRFVAIFAVPLLSFHFISTNDPYAMNFRFVAADTLQKIIMLVLLALWANLTKNGSLEWMITIFSLSTLPNTLVMGIPLLIAMYGTYAGSLMVQVVVLQCIIWYTLLLFLFEYRGAKLLIMEQFPETGASIVSFKVESDVVSLDGHDFLETDAEIGNDGKLHVTVRKSNASRRSLMMTPRPSNLTGAEIYSLSSTPRGSNFNHSDFYSVMGFPGGRLSNFGPADLYSVQSSRGPTPRPSNFEENNAVKYGFYNNTNSSVPAAGSYPAPNPEFSTGTGVSTKPNKIPKENQQQLQEKDSKASHDAKELHMFVWSSSASPVSDVFGGGAGDNVATEQSEQGAKEIRMVVSDQPRKSNARGGGDDIGGLDSGEGEREIEKATAGLNKMGSNSTAELEAAGGDGGGNNGTHMPPTSVMTRLILIMVWRKLIRNPNTYSSLIGLIWALVAYRWHVAMPKILQQSISILSDAGLGMAMFSLGLFMALQPKIIACGNSVATFAMAVRFITGPAIMAVAGIAIGLHGDLLRIAIVQAALPQGIVPFVFAKEYNVHPTILSTGVIFGMLIALPITLVYYILLGL.

Residues M1 to L7 are Extracellular-facing. Residues Y8 to V28 traverse the membrane as a helical segment. The Cytoplasmic portion of the chain corresponds to Q29 to Q38. The helical transmembrane segment at C39–I59 threads the bilayer. Residue V51 participates in (indol-3-yl)acetate binding. The Extracellular segment spans residues S60–R70. The chain crosses the membrane as a helical span at residues F71–N91. At L92–M101 the chain is on the cytoplasmic side. Residues I102–I122 form a helical membrane-spanning segment. 2 residues coordinate (indol-3-yl)acetate: N112 and L114. Residues A123–S131 are Extracellular-facing. A helical transmembrane segment spans residues L132–F152. Residue Y145 coordinates (indol-3-yl)acetate. Over E153–S476 the chain is Cytoplasmic. S223, S240, and S280 each carry phosphoserine. Positions A302 to H343 are disordered. A compositionally biased stretch (polar residues) spans E312–L334. S358 and S395 each carry phosphoserine. The disordered stretch occupies residues D390–E411. A compositionally biased stretch (gly residues) spans R398–S409. The helical transmembrane segment at L477–L497 threads the bilayer. The Extracellular segment spans residues Q498 to S500. The chain crosses the membrane as a helical span at residues I501–A521. Residues L522 to T535 are Cytoplasmic-facing. The helical transmembrane segment at F536–I556 threads the bilayer. Topologically, residues G557–D561 are extracellular. A helical transmembrane segment spans residues L562–A582. (indol-3-yl)acetate is bound by residues I576 and V577. The Cytoplasmic segment spans residues K583–G595. Residues V596–L616 form a helical membrane-spanning segment.

It belongs to the auxin efflux carrier (TC 2.A.69.1) family. Homodimer. Expressed in the quiescent center precursors and surrounding cells. Present in columella cells of primary roots. Detected in pollen.

The protein localises to the cell membrane. Functionally, acts as a component of the auxin efflux carrier. Plays a role in generating a sink for auxin into columella cells. Maintains the endogenous auxin gradient, which is essential for correct root patterning. Involved in EXO70A3-regulated gravitropic responses in columella cells and in root system architecture (RSA). Together with PIN3 and PIN7, involved in the connective auxin transport (CAT) that ensures communication across the shoot system, and modulates strigolactone-mediated shoot branching control. The abcb19 pin3 pin4 pin7 quadruple mutant exhibits an additive phenotype on strigolactone-mediated bud outgrowth responses and shoot branching control. The chain is Auxin efflux carrier component 4 from Arabidopsis thaliana (Mouse-ear cress).